The chain runs to 478 residues: Vitronectin (478 aa).

Residues 1–19 (MAPLRPFFILALVAWVSLA) form the signal peptide. An SMB domain is found at 20–63 (DQESCKGRCTQGFMASKKCQCDELCTYYQSCCADYMEQCKPQVT). 7 cysteine pairs are disulfide-bonded: Cys24-Cys28, Cys24-Cys40, Cys28-Cys58, Cys38-Cys40, Cys38-Cys51, Cys44-Cys50, and Cys51-Cys58. A Cell attachment site motif is present at residues 64–66 (RGD). Thr69 carries the post-translational modification Phosphothreonine. Sulfotyrosine is present on residues Tyr75, Tyr78, and Tyr80. A disordered region spans residues 82–153 (EEPKNNTNTG…QGTPEFPEEE (72 aa)). An N-linked (GlcNAc...) asparagine glycan is attached at Asn86. Residues 86–99 (NNTNTGVQPENTSP) are compositionally biased toward polar residues. Over residues 131–141 (EQQEEILRPDT) the composition is skewed to basic and acidic residues. Hemopexin repeat units lie at residues 157-201 (GKPF…VWGI), 202-249 (EGPI…FSGI), and 250-304 (PDNV…FEHF). Residues Asn168 and Asn241 are each glycosylated (N-linked (GlcNAc...) asparagine). Sulfotyrosine is present on residues Tyr278 and Tyr281. Cys292 and Cys431 are joined by a disulfide. Ser311 and Ser362 each carry phosphoserine. Residues 359–395 (LSHSAQAKKQKSKRRSRKRYRSRRGRGHRRSQSSNSR) form a disordered region. Over residues 364-389 (QAKKQKSKRRSRKRYRSRRGRGHRRS) the composition is skewed to basic residues. The tract at residues 366-399 (KKQKSKRRSRKRYRSRRGRGHRRSQSSNSRRSSR) is heparin-binding. Ser398 bears the Phosphoserine; by PKA mark. A sulfotyrosine mark is found at Tyr416, Tyr419, and Tyr421. The stretch at 420 to 473 (DYDMDWLVPATCEPIQSVYFFSGDKYYRVNLRTRRVDSVNPPYPRSIAQYWLGC) is one Hemopexin 4 repeat.

As to quaternary structure, interacts with SERPINE1/PAI1, insulin and C1QBP. Post-translationally, sulfated on tyrosine residues. N- and O-glycosylated. In terms of processing, it has been suggested that the active SMB domain may be permitted considerable disulfide bond heterogeneity or variability, thus two alternate disulfide patterns based on 3D structures are described with 1 disulfide bond conserved in both. In terms of tissue distribution, plasma.

The protein localises to the secreted. Its subcellular location is the extracellular space. Vitronectin is a cell adhesion and spreading factor found in serum and tissues. Vitronectin interact with glycosaminoglycans and proteoglycans. Is recognized by certain members of the integrin family and serves as a cell-to-substrate adhesion molecule. Inhibitor of the membrane-damaging effect of the terminal cytolytic complement pathway. The polypeptide is Vitronectin (Vtn) (Mus musculus (Mouse)).